The sequence spans 82 residues: Small ribosomal subunit protein bS16 (82 aa).

The protein belongs to the bacterial ribosomal protein bS16 family.

The chain is Small ribosomal subunit protein bS16 from Synechocystis sp. (strain ATCC 27184 / PCC 6803 / Kazusa).